A 323-amino-acid chain; its full sequence is Fructose-1,6-bisphosphatase class 1 (323 aa).

Positions 90, 111, 113, and 114 each coordinate Mg(2+). Substrate is bound by residues 114–117 (DGSS), Tyr-222, and Lys-253. Residue Glu-259 participates in Mg(2+) binding.

It belongs to the FBPase class 1 family. In terms of assembly, homotetramer. Requires Mg(2+) as cofactor.

It localises to the cytoplasm. The enzyme catalyses beta-D-fructose 1,6-bisphosphate + H2O = beta-D-fructose 6-phosphate + phosphate. Its pathway is carbohydrate biosynthesis; gluconeogenesis. This chain is Fructose-1,6-bisphosphatase class 1, found in Pelobacter propionicus (strain DSM 2379 / NBRC 103807 / OttBd1).